A 310-amino-acid polypeptide reads, in one-letter code: Lipoyl synthase (310 aa).

Residues C61, C66, C72, C87, C91, C94, and S300 each contribute to the [4Fe-4S] cluster site. One can recognise a Radical SAM core domain in the interval 73–289; sequence FNNGTATFMI…EYIALSLGFS (217 aa).

The protein belongs to the radical SAM superfamily. Lipoyl synthase family. [4Fe-4S] cluster is required as a cofactor.

It is found in the cytoplasm. It carries out the reaction [[Fe-S] cluster scaffold protein carrying a second [4Fe-4S](2+) cluster] + N(6)-octanoyl-L-lysyl-[protein] + 2 oxidized [2Fe-2S]-[ferredoxin] + 2 S-adenosyl-L-methionine + 4 H(+) = [[Fe-S] cluster scaffold protein] + N(6)-[(R)-dihydrolipoyl]-L-lysyl-[protein] + 4 Fe(3+) + 2 hydrogen sulfide + 2 5'-deoxyadenosine + 2 L-methionine + 2 reduced [2Fe-2S]-[ferredoxin]. Its pathway is protein modification; protein lipoylation via endogenous pathway; protein N(6)-(lipoyl)lysine from octanoyl-[acyl-carrier-protein]: step 2/2. Its function is as follows. Catalyzes the radical-mediated insertion of two sulfur atoms into the C-6 and C-8 positions of the octanoyl moiety bound to the lipoyl domains of lipoate-dependent enzymes, thereby converting the octanoylated domains into lipoylated derivatives. The polypeptide is Lipoyl synthase (Buchnera aphidicola subsp. Cinara cedri (strain Cc)).